Consider the following 104-residue polypeptide: UPF0145 protein Hlac_1015 (104 aa).

The protein belongs to the UPF0145 family.

The protein is UPF0145 protein Hlac_1015 of Halorubrum lacusprofundi (strain ATCC 49239 / DSM 5036 / JCM 8891 / ACAM 34).